Here is a 294-residue protein sequence, read N- to C-terminus: Bidirectional sugar transporter SWEET13 (294 aa).

At 1-7 the chain is on the extracellular side; the sequence is MALTNNL. The chain crosses the membrane as a helical span at residues 8-28; it reads WAFVFGILGNIISFVVFLAPV. The MtN3/slv 1 domain maps to 10–97; the sequence is FVFGILGNII…VLFVSYANKK (88 aa). Over 29–42 the chain is Cytoplasmic; sequence PTFVRICKKKSTEG. The chain crosses the membrane as a helical span at residues 43–63; sequence FQSLPYVSALFSAMLWIYYAM. The Extracellular portion of the chain corresponds to 64-69; sequence QKDGTA. A helical membrane pass occupies residues 70–90; it reads FLLITINAFGCVIETIYIVLF. Over 91–104 the chain is Cytoplasmic; the sequence is VSYANKKTRISTLK. Residues 105–125 traverse the membrane as a helical segment; that stretch reads VLGLLNFLGFAAIVLVCELLT. Topologically, residues 126–132 are extracellular; it reads KGSTREK. The helical transmembrane segment at 133–153 threads the bilayer; sequence VLGGICVGFSVSVFAAPLSIM. Residues 133–216 enclose the MtN3/slv 2 domain; sequence VLGGICVGFS…MILYIIFKYY (84 aa). Over 154-166 the chain is Cytoplasmic; sequence RVVVRTRSVEFMP. A helical membrane pass occupies residues 167 to 187; that stretch reads FSLSLFLTISAVTWLFYGLAI. At 188–192 the chain is on the extracellular side; that stretch reads KDFYV. The chain crosses the membrane as a helical span at residues 193–213; it reads ALPNVLGAFLGAVQMILYIIF. The Cytoplasmic segment spans residues 214–294; it reads KYYKTPVAQK…NKDVQKQSQV (81 aa). Residues 273–294 form a disordered region; sequence KSQNMTDPKDQINKDVQKQSQV. A compositionally biased stretch (basic and acidic residues) spans 279-294; the sequence is DPKDQINKDVQKQSQV.

Belongs to the SWEET sugar transporter family. In terms of assembly, forms heterooligomers with SWEET1, SWEET3, SWEET6, SWEET7, SWEET8, SWEET9, SWEET11 and SWEET17. In terms of tissue distribution, expressed at low levels in leaves.

Its subcellular location is the cell membrane. In terms of biological role, mediates both low-affinity uptake and efflux of sugar across the plasma membrane. Involved in nurturing the male gametophyte. In Arabidopsis thaliana (Mouse-ear cress), this protein is Bidirectional sugar transporter SWEET13.